Here is a 370-residue protein sequence, read N- to C-terminus: tRNA-specific 2-thiouridylase MnmA (370 aa).

ATP-binding positions include A25 to S32 and L51. Catalysis depends on C112, which acts as the Nucleophile. An intrachain disulfide couples C112 to C211. Position 137 (G137) interacts with ATP. An interaction with tRNA region spans residues K161 to Q163. The active-site Cysteine persulfide intermediate is the C211. The tract at residues R316–Y317 is interaction with tRNA.

It belongs to the MnmA/TRMU family.

Its subcellular location is the cytoplasm. It catalyses the reaction S-sulfanyl-L-cysteinyl-[protein] + uridine(34) in tRNA + AH2 + ATP = 2-thiouridine(34) in tRNA + L-cysteinyl-[protein] + A + AMP + diphosphate + H(+). Catalyzes the 2-thiolation of uridine at the wobble position (U34) of tRNA, leading to the formation of s(2)U34. The chain is tRNA-specific 2-thiouridylase MnmA from Synechococcus sp. (strain JA-3-3Ab) (Cyanobacteria bacterium Yellowstone A-Prime).